We begin with the raw amino-acid sequence, 266 residues long: Norfluorocurarine synthase 1 (266 aa).

The 111-residue stretch at 11–121 (HFVLVHGAGH…VMPDAVHPPS (111 aa)) folds into the AB hydrolase-1 domain. Residues Ser-86, Asp-216, and His-244 contribute to the active site.

The protein belongs to the AB hydrolase superfamily. As to quaternary structure, homodimer. In terms of tissue distribution, mainly expressed in roots.

It catalyses the reaction 17-dehydropreakuammicine + H2O = norfluorocurarine + methanol + CO2. It participates in alkaloid biosynthesis. Functionally, hydrolase involved in the biosynthesis of curare monoterpene indole alkaloids (MIAs), natural products such as strychnine, a neurotoxic compound used as a pesticide to control rodents, and its pharmacologically active derivatives, including brucine, used to regulate blood pressure. Curare alkaloids act as animal glycine receptor antagonists. Catalyzes the conversion of dehydropreakuammicine to norfluorocurarine. This is Norfluorocurarine synthase 1 from Strychnos nux-vomica (Poison nut).